The primary structure comprises 377 residues: Guanine nucleotide-binding protein subunit beta-2 (377 aa).

WD repeat units lie at residues 63–93, 105–135, 154–185, 202–233, 246–276, 293–323, and 339–369; these read GHTGKVYSLDWTPEKNRIVSASQDGRLIVWN, LPCAWVMTCAFSPSGQSVACGGLDSVCSIFN, GHKGYVSSCQYVPDEDTHVITSSGDQTCVLWD, GHTADVQSVSISSSNPRLFVSGSCDSTARLWD, GHEGDVNTVKFFPDGNRFGTGSDDGTCRLFD, GDIPHVTSMAFSISGRLLFVGYSNGDCYVWD, and SHEGRISCLGLSADGSALCTGSWDTNLKIWA.

Belongs to the WD repeat G protein beta family. In terms of assembly, g proteins are composed of 3 units, alpha, beta and gamma.

Its function is as follows. Guanine nucleotide-binding proteins (G proteins) are involved as a modulator or transducer in various transmembrane signaling systems. The beta and gamma chains are required for the GTPase activity, for replacement of GDP by GTP, and for G protein-effector interaction. The protein is Guanine nucleotide-binding protein subunit beta-2 of Nicotiana tabacum (Common tobacco).